A 668-amino-acid chain; its full sequence is UvrABC system protein B (668 aa).

Positions 31-188 (HGIEAGEKAQ…RKLVNIQFER (158 aa)) constitute a Helicase ATP-binding domain. ATP is bound at residue 44-51 (GATGTGKT). The Beta-hairpin motif lies at 97 to 120 (YYDYYQPEAYVPSSDTYIEKDSSI). One can recognise a Helicase C-terminal domain in the interval 435-601 (QMDDLVGEIN…TIIKPIRDLI (167 aa)). The region spanning 630–665 (EKLIARLEDEMRAAAKKLDFEQAASLRDTIMDMKTE) is the UVR domain.

It belongs to the UvrB family. Forms a heterotetramer with UvrA during the search for lesions. Interacts with UvrC in an incision complex.

The protein resides in the cytoplasm. The UvrABC repair system catalyzes the recognition and processing of DNA lesions. A damage recognition complex composed of 2 UvrA and 2 UvrB subunits scans DNA for abnormalities. Upon binding of the UvrA(2)B(2) complex to a putative damaged site, the DNA wraps around one UvrB monomer. DNA wrap is dependent on ATP binding by UvrB and probably causes local melting of the DNA helix, facilitating insertion of UvrB beta-hairpin between the DNA strands. Then UvrB probes one DNA strand for the presence of a lesion. If a lesion is found the UvrA subunits dissociate and the UvrB-DNA preincision complex is formed. This complex is subsequently bound by UvrC and the second UvrB is released. If no lesion is found, the DNA wraps around the other UvrB subunit that will check the other stand for damage. In Levilactobacillus brevis (strain ATCC 367 / BCRC 12310 / CIP 105137 / JCM 1170 / LMG 11437 / NCIMB 947 / NCTC 947) (Lactobacillus brevis), this protein is UvrABC system protein B.